A 726-amino-acid chain; its full sequence is Long-chain-alcohol oxidase FAO4A (726 aa).

A helical transmembrane segment spans residues 103–119 (ILLNWSSSYFSLLRMLF). 224 to 239 (CDAVVVGSGSGGGVAA) is an FAD binding site. H659 acts as the Proton acceptor in catalysis.

Belongs to the GMC oxidoreductase family.

It localises to the membrane. It carries out the reaction a long-chain primary fatty alcohol + O2 = a long-chain fatty aldehyde + H2O2. In terms of biological role, long-chain fatty alcohol oxidase involved in the omega-oxidation pathway of lipid degradation. The chain is Long-chain-alcohol oxidase FAO4A (FAO4A) from Arabidopsis thaliana (Mouse-ear cress).